The sequence spans 391 residues: Thioredoxin-interacting protein (391 aa).

A Glycyl lysine isopeptide (Lys-Gly) (interchain with G-Cter in ubiquitin) cross-link involves residue K212. A Phosphoserine modification is found at S361.

This sequence belongs to the arrestin family. Homodimer; disulfide-linked. Interacts with TXN/thioredoxin through its redox-active site. Interacts with transcriptional repressors ZBTB16, ZBTB32 and HDAC1. Interacts with DDIT4. In terms of processing, ubiquitinated; undergoes heterotypic 'Lys-48'-/'Lys-63'-branched polyubiquitination catalyzed by ITCH and UBR5 resulting in proteasomal degradation. Deubiquitinated by USP5, leading to TXNIP stabilization.

The protein localises to the cytoplasm. In terms of biological role, may act as an oxidative stress mediator by inhibiting thioredoxin activity or by limiting its bioavailability. Interacts with COPS5 and restores COPS5-induced suppression of CDKN1B stability, blocking the COPS5-mediated translocation of CDKN1B from the nucleus to the cytoplasm. Functions as a transcriptional repressor, possibly by acting as a bridge molecule between transcription factors and corepressor complexes, and over-expression will induce G0/G1 cell cycle arrest. Required for the maturation of natural killer cells. Acts as a suppressor of tumor cell growth. Inhibits the proteasomal degradation of DDIT4, and thereby contributes to the inhibition of the mammalian target of rapamycin complex 1 (mTORC1). This is Thioredoxin-interacting protein (TXNIP) from Sus scrofa (Pig).